The following is a 452-amino-acid chain: tRNA modification GTPase MnmE (452 aa).

3 residues coordinate (6S)-5-formyl-5,6,7,8-tetrahydrofolate: Arg22, Glu79, and Lys119. Residues 215 to 375 (GMKVVIAGRP…LRQHLKQSMG (161 aa)) enclose the TrmE-type G domain. Position 225 (Asn225) interacts with K(+). GTP is bound by residues 225–230 (NAGKSS), 244–250 (TDIAGTT), 269–272 (DTAG), and 333–336 (NKAD). Mg(2+) is bound at residue Ser229. K(+)-binding residues include Thr244, Ile246, and Thr249. Thr250 is a binding site for Mg(2+). Lys452 contributes to the (6S)-5-formyl-5,6,7,8-tetrahydrofolate binding site.

This sequence belongs to the TRAFAC class TrmE-Era-EngA-EngB-Septin-like GTPase superfamily. TrmE GTPase family. As to quaternary structure, homodimer. Heterotetramer of two MnmE and two MnmG subunits. The cofactor is K(+).

It is found in the cytoplasm. Exhibits a very high intrinsic GTPase hydrolysis rate. Involved in the addition of a carboxymethylaminomethyl (cmnm) group at the wobble position (U34) of certain tRNAs, forming tRNA-cmnm(5)s(2)U34. This chain is tRNA modification GTPase MnmE, found in Histophilus somni (strain 129Pt) (Haemophilus somnus).